Consider the following 420-residue polypeptide: Histidine--tRNA ligase (420 aa).

This sequence belongs to the class-II aminoacyl-tRNA synthetase family. Homodimer.

The protein resides in the cytoplasm. The catalysed reaction is tRNA(His) + L-histidine + ATP = L-histidyl-tRNA(His) + AMP + diphosphate + H(+). The sequence is that of Histidine--tRNA ligase from Streptomyces avermitilis (strain ATCC 31267 / DSM 46492 / JCM 5070 / NBRC 14893 / NCIMB 12804 / NRRL 8165 / MA-4680).